A 32-amino-acid chain; its full sequence is MSALSYFFAAYCIGWVISHSILVFKKLSEVST.

A helical transmembrane segment spans residues leucine 4 to phenylalanine 24.

This sequence belongs to the inovirus G9P protein family.

The protein localises to the virion. It is found in the host membrane. May initiate with G7P the virion concomitant assembly-budding process, by interacting with the packaging signal of the viral genome. The assembly-budding takes place at the host inner membrane. In turn, G7P and G9P are present at the end of the filamentous virion that emerges first from the bacterial host. The protein is Tail virion protein G9P (IX) of Escherichia phage If1 (Bacteriophage If1).